A 468-amino-acid polypeptide reads, in one-letter code: 3-isopropylmalate dehydratase large subunit (468 aa).

Residues C346, C406, and C409 each coordinate [4Fe-4S] cluster.

It belongs to the aconitase/IPM isomerase family. LeuC type 1 subfamily. As to quaternary structure, heterodimer of LeuC and LeuD. The cofactor is [4Fe-4S] cluster.

It carries out the reaction (2R,3S)-3-isopropylmalate = (2S)-2-isopropylmalate. It functions in the pathway amino-acid biosynthesis; L-leucine biosynthesis; L-leucine from 3-methyl-2-oxobutanoate: step 2/4. Its function is as follows. Catalyzes the isomerization between 2-isopropylmalate and 3-isopropylmalate, via the formation of 2-isopropylmaleate. This chain is 3-isopropylmalate dehydratase large subunit, found in Cyanothece sp. (strain PCC 7425 / ATCC 29141).